The sequence spans 275 residues: Thioredoxin-like 1-1, chloroplastic (275 aa).

A chloroplast-targeting transit peptide spans 1 to 72; it reads MTEVISKTSL…GDSQDESFRR (72 aa). Residues 73 to 206 form the Thioredoxin domain; it reads SSAITAQTTL…FRDALAKHGP (134 aa). Catalysis depends on nucleophile residues cysteine 129 and cysteine 132. Cysteines 129 and 132 form a disulfide. The interval 238-275 is disordered; it reads KPVPVEKEAATPDSNPSLPVPLPSMSSNDEKTLVSAGR. Low complexity predominate over residues 249-264; sequence PDSNPSLPVPLPSMSS.

It belongs to the thioredoxin family.

Its subcellular location is the plastid. The protein resides in the chloroplast. Thiol-disulfide oxidoreductase that may participate in various redox reactions. Possesses insulin disulfide bonds reducing activity. This is Thioredoxin-like 1-1, chloroplastic from Arabidopsis thaliana (Mouse-ear cress).